The chain runs to 156 residues: Glutaredoxin-2, mitochondrial (156 aa).

The transit peptide at 1-19 (MSWRRAASVGRRLVASGRI) directs the protein to the mitochondrion. The 101-residue stretch at 50–150 (VNQIQETISN…PLVHQCYLKK (101 aa)) folds into the Glutaredoxin domain. Cysteine 61 contacts [2Fe-2S] cluster. Lysine 67 contacts glutathione. Cysteine 70 is subject to S-glutathionyl cysteine; alternate. Cysteine 70 and cysteine 73 form a disulfide bridge. 2 residues coordinate glutathione: glutamine 102 and valine 114. Cysteine 146 contributes to the [2Fe-2S] cluster binding site.

This sequence belongs to the glutaredoxin family. As to quaternary structure, monomer; active form. Homodimer; inactive form. The homodimer is probably linked by 1 2Fe-2S cluster. As to expression, widely expressed. Highly expressed in testis, and at much lower level in kidney and brain.

The protein resides in the mitochondrion. The protein localises to the nucleus. Its activity is regulated as follows. The 2Fe-2S present in the homodimer leads to inactivation of the enzyme. The 2Fe-2S may serve as a redox sensor: the presence of one-electron oxidants or reductants leading to the loss of the 2Fe-2S cluster, subsequent monomerization and activation of the enzyme. In terms of biological role, glutathione-dependent oxidoreductase that facilitates the maintenance of mitochondrial redox homeostasis upon induction of apoptosis by oxidative stress. Involved in response to hydrogen peroxide and regulation of apoptosis caused by oxidative stress. Acts as a very efficient catalyst of monothiol reactions because of its high affinity for protein glutathione-mixed disulfides. Can receive electrons not only from glutathione (GSH), but also from thioredoxin reductase supporting both monothiol and dithiol reactions. Efficiently catalyzes both glutathionylation and deglutathionylation of mitochondrial complex I, which in turn regulates the superoxide production by the complex. Overexpression decreases the susceptibility to apoptosis and prevents loss of cardiolipin and cytochrome c release. This chain is Glutaredoxin-2, mitochondrial (Glrx2), found in Mus musculus (Mouse).